The primary structure comprises 210 residues: Thymidylate kinase (210 aa).

ATP is bound at residue 10–17 (GLEGAGKS).

It belongs to the thymidylate kinase family.

The enzyme catalyses dTMP + ATP = dTDP + ADP. Phosphorylation of dTMP to form dTDP in both de novo and salvage pathways of dTTP synthesis. The polypeptide is Thymidylate kinase (Haemophilus influenzae (strain PittEE)).